We begin with the raw amino-acid sequence, 290 residues long: Nucleoid occlusion protein (290 aa).

The segment at residues 153–172 (EALAQRLGKGQSTIANKLRL) is a DNA-binding region (H-T-H motif).

It belongs to the ParB family.

The protein resides in the cytoplasm. It is found in the nucleoid. Effects nucleoid occlusion by binding relatively nonspecifically to DNA and preventing the assembly of the division machinery in the vicinity of the nucleoid, especially under conditions that disturb the cell cycle. It helps to coordinate cell division and chromosome segregation by preventing the formation of the Z ring through the nucleoid, which would cause chromosome breakage. This is Nucleoid occlusion protein from Bacillus cereus (strain AH187).